A 269-amino-acid polypeptide reads, in one-letter code: Formamidopyrimidine-DNA glycosylase (269 aa).

Pro-2 acts as the Schiff-base intermediate with DNA in catalysis. Residue Glu-3 is the Proton donor of the active site. Lys-57 (proton donor; for beta-elimination activity) is an active-site residue. The DNA site is built by His-90, Arg-109, and Lys-150. Residues 235–269 form an FPG-type zinc finger; that stretch reads QVYGRKGEPCRVCGTPIVATKHAQRATFYCRHCQK. Residue Arg-259 is the Proton donor; for delta-elimination activity of the active site.

This sequence belongs to the FPG family. In terms of assembly, monomer. It depends on Zn(2+) as a cofactor.

The catalysed reaction is Hydrolysis of DNA containing ring-opened 7-methylguanine residues, releasing 2,6-diamino-4-hydroxy-5-(N-methyl)formamidopyrimidine.. The enzyme catalyses 2'-deoxyribonucleotide-(2'-deoxyribose 5'-phosphate)-2'-deoxyribonucleotide-DNA = a 3'-end 2'-deoxyribonucleotide-(2,3-dehydro-2,3-deoxyribose 5'-phosphate)-DNA + a 5'-end 5'-phospho-2'-deoxyribonucleoside-DNA + H(+). Involved in base excision repair of DNA damaged by oxidation or by mutagenic agents. Acts as a DNA glycosylase that recognizes and removes damaged bases. Has a preference for oxidized purines, such as 7,8-dihydro-8-oxoguanine (8-oxoG). Has AP (apurinic/apyrimidinic) lyase activity and introduces nicks in the DNA strand. Cleaves the DNA backbone by beta-delta elimination to generate a single-strand break at the site of the removed base with both 3'- and 5'-phosphates. In Salmonella choleraesuis (strain SC-B67), this protein is Formamidopyrimidine-DNA glycosylase.